Reading from the N-terminus, the 64-residue chain is Large ribosomal subunit protein bL33 (64 aa).

The protein belongs to the bacterial ribosomal protein bL33 family.

The protein is Large ribosomal subunit protein bL33 of Nostoc sp. (strain PCC 7120 / SAG 25.82 / UTEX 2576).